Reading from the N-terminus, the 188-residue chain is UPF0157 protein VC_A0354 (188 aa).

Belongs to the UPF0157 (GrpB) family.

This is UPF0157 protein VC_A0354 from Vibrio cholerae serotype O1 (strain ATCC 39315 / El Tor Inaba N16961).